Reading from the N-terminus, the 122-residue chain is Small ribosomal subunit protein uS13 (122 aa).

The disordered stretch occupies residues 99 to 122 (RGQRTHTNARTRKGPAKAIAGKKK).

This sequence belongs to the universal ribosomal protein uS13 family. Part of the 30S ribosomal subunit. Forms a loose heterodimer with protein S19. Forms two bridges to the 50S subunit in the 70S ribosome.

Located at the top of the head of the 30S subunit, it contacts several helices of the 16S rRNA. In the 70S ribosome it contacts the 23S rRNA (bridge B1a) and protein L5 of the 50S subunit (bridge B1b), connecting the 2 subunits; these bridges are implicated in subunit movement. Contacts the tRNAs in the A and P-sites. This Allorhizobium ampelinum (strain ATCC BAA-846 / DSM 112012 / S4) (Agrobacterium vitis (strain S4)) protein is Small ribosomal subunit protein uS13.